Reading from the N-terminus, the 385-residue chain is S-adenosylmethionine synthase (385 aa).

Histidine 16 contributes to the ATP binding site. Aspartate 18 contributes to the Mg(2+) binding site. Glutamate 44 is a K(+) binding site. The L-methionine site is built by glutamate 57 and glutamine 100. Residues 100-110 (QSPDINQGVDR) form a flexible loop region. Residues 164–166 (DGK), 230–231 (KF), aspartate 239, 245–246 (RK), alanine 262, and lysine 266 each bind ATP. Position 239 (aspartate 239) interacts with L-methionine. Lysine 270 is an L-methionine binding site.

It belongs to the AdoMet synthase family. Homotetramer; dimer of dimers. Requires Mg(2+) as cofactor. It depends on K(+) as a cofactor.

The protein localises to the cytoplasm. It catalyses the reaction L-methionine + ATP + H2O = S-adenosyl-L-methionine + phosphate + diphosphate. Its pathway is amino-acid biosynthesis; S-adenosyl-L-methionine biosynthesis; S-adenosyl-L-methionine from L-methionine: step 1/1. Catalyzes the formation of S-adenosylmethionine (AdoMet) from methionine and ATP. The overall synthetic reaction is composed of two sequential steps, AdoMet formation and the subsequent tripolyphosphate hydrolysis which occurs prior to release of AdoMet from the enzyme. The polypeptide is S-adenosylmethionine synthase (Helicobacter pylori (strain P12)).